We begin with the raw amino-acid sequence, 328 residues long: Pancreas transcription factor 1 subunit alpha (328 aa).

Residues 163–215 (QLRQAANVRERRRMQSINDAFEGLRSHIPTLPYEKRLSKVDTLRLAIGYINFL) enclose the bHLH domain. Disordered regions lie at residues 259–278 (RGTRSPSPSDPDYGLPPLAG) and 305–328 (DPRKLNSKSSFNNIENEPPFEFVS).

Component of the pancreas transcription factor 1 complex (PTF1) which is composed of TCF3/p75, TCF12/p64 and PTF1A/p48. TCF3 is responsible for the nuclear import of the p48/p64 complex. Interacts with TCF3 and RBPSUH/RBP-Jkappa. Pancreas-specific (at protein level). Loss of expression is seen in ductal type pancreas cancers.

Its subcellular location is the nucleus. The protein resides in the cytoplasm. Its function is as follows. Transcription factor implicated in the cell fate determination in various organs. Binds to the E-box consensus sequence 5'-CANNTG-3'. Plays a role in early and late pancreas development and differentiation. Important for determining whether cells allocated to the pancreatic buds continue towards pancreatic organogenesis or revert back to duodenal fates. May be involved in the maintenance of exocrine pancreas-specific gene expression including ELA1 and amylase. Required for the formation of pancreatic acinar and ductal cells. Plays an important role in cerebellar development. Directly regulated by FOXN4 and RORC during retinal development, FOXN4-PTF1A pathway plays a central role in directing the differentiation of retinal progenitors towards horizontal and amacrine fates. In Homo sapiens (Human), this protein is Pancreas transcription factor 1 subunit alpha (PTF1A).